The primary structure comprises 123 residues: Small ribosomal subunit protein uS12 (123 aa).

Asp-89 is subject to 3-methylthioaspartic acid.

The protein belongs to the universal ribosomal protein uS12 family. As to quaternary structure, part of the 30S ribosomal subunit. Contacts proteins S8 and S17. May interact with IF1 in the 30S initiation complex.

With S4 and S5 plays an important role in translational accuracy. Functionally, interacts with and stabilizes bases of the 16S rRNA that are involved in tRNA selection in the A site and with the mRNA backbone. Located at the interface of the 30S and 50S subunits, it traverses the body of the 30S subunit contacting proteins on the other side and probably holding the rRNA structure together. The combined cluster of proteins S8, S12 and S17 appears to hold together the shoulder and platform of the 30S subunit. This Mesorhizobium japonicum (strain LMG 29417 / CECT 9101 / MAFF 303099) (Mesorhizobium loti (strain MAFF 303099)) protein is Small ribosomal subunit protein uS12.